A 552-amino-acid polypeptide reads, in one-letter code: Steroid transmembrane transporter SLC22A24 (552 aa).

12 helical membrane passes run 16–36 (FQIL…PHML), 144–164 (LISV…LIFG), 178–198 (CCLL…TFPV), 204–224 (FLGG…MSEW), 235–255 (GIIL…GFVI), 267–287 (IPLF…QWLI), 350–370 (IFYL…LMLN), 378–398 (IFLF…AVLL), 407–427 (ISQM…IFLS), 435–455 (VALA…HTVH), 469–489 (IGLN…LMIL), and 496–516 (LPWI…LLLP). The tract at residues 524–552 (PNTIQDVENNRRDSRKTKQEDISMKVTQF) is disordered. The segment covering 531-546 (ENNRRDSRKTKQEDIS) has biased composition (basic and acidic residues).

Belongs to the major facilitator (TC 2.A.1) superfamily. Organic cation transporter (TC 2.A.1.19) family.

It localises to the cell membrane. It carries out the reaction estrone 3-sulfate(out) + glutarate(in) = estrone 3-sulfate(in) + glutarate(out). The catalysed reaction is 17beta-estradiol 17-O-(beta-D-glucuronate)(out) + glutarate(in) = 17beta-estradiol 17-O-(beta-D-glucuronate)(in) + glutarate(out). The enzyme catalyses taurocholate(out) + glutarate(in) = taurocholate(in) + glutarate(out). It catalyses the reaction glycocholate(out) + glutarate(in) = glycocholate(in) + glutarate(out). It carries out the reaction dehydroepiandrosterone 3-sulfate(out) + glutarate(in) = dehydroepiandrosterone 3-sulfate(in) + glutarate(out). The catalysed reaction is glutarate(in) + succinate(out) = glutarate(out) + succinate(in). Its function is as follows. Renal transmembrane organic anion/dicarboxylate exchanger that participates in the reabsorption of conjugated steroids, as well as bile acids, driven by an outward gradient of dicarboxylates such as glutarate or succinate. Transports taurocholate, estrone 3-sulfate, and estradiol-17-glucuronide (17beta-estradiol 17-O-(beta-D-glucuronate)), but not androstanediol glucuronide (5alpha-androstane-3alpha,17beta-diol 3-O-(beta-D-glucuronate)). This Equus caballus (Horse) protein is Steroid transmembrane transporter SLC22A24.